A 62-amino-acid polypeptide reads, in one-letter code: Large ribosomal subunit protein bL28 (62 aa).

Belongs to the bacterial ribosomal protein bL28 family.

The protein is Large ribosomal subunit protein bL28 of Parafrankia sp. (strain EAN1pec).